A 260-amino-acid chain; its full sequence is Thiazole synthase (260 aa).

Lys-96 acts as the Schiff-base intermediate with DXP in catalysis. 1-deoxy-D-xylulose 5-phosphate contacts are provided by residues Gly-157, 184–185, and 206–207; these read AG and NT.

Belongs to the ThiG family. In terms of assembly, homotetramer. Forms heterodimers with either ThiH or ThiS.

The protein resides in the cytoplasm. It catalyses the reaction [ThiS sulfur-carrier protein]-C-terminal-Gly-aminoethanethioate + 2-iminoacetate + 1-deoxy-D-xylulose 5-phosphate = [ThiS sulfur-carrier protein]-C-terminal Gly-Gly + 2-[(2R,5Z)-2-carboxy-4-methylthiazol-5(2H)-ylidene]ethyl phosphate + 2 H2O + H(+). It functions in the pathway cofactor biosynthesis; thiamine diphosphate biosynthesis. Catalyzes the rearrangement of 1-deoxy-D-xylulose 5-phosphate (DXP) to produce the thiazole phosphate moiety of thiamine. Sulfur is provided by the thiocarboxylate moiety of the carrier protein ThiS. In vitro, sulfur can be provided by H(2)S. The polypeptide is Thiazole synthase (Nitrobacter winogradskyi (strain ATCC 25391 / DSM 10237 / CIP 104748 / NCIMB 11846 / Nb-255)).